The following is a 284-amino-acid chain: uncharacterized protein (284 aa).

The first 24 residues, 1 to 24, serve as a signal peptide directing secretion; that stretch reads MLYSRESRTTVLFLALVTSLTVLC. Topologically, residues 25-84 are cytoplasmic; it reads HSVDVTTVFTTSTITEITTVTAAPQPQNKAETALNTATNIIQTMQFLFNCAPFKWKGPLK. A helical transmembrane segment spans residues 85–104; the sequence is ITSCALNFIVLLLTAWGYLL. The Extracellular portion of the chain corresponds to 105 to 284; the sequence is KYLQENKLNS…SVHMYSSSLL (180 aa). The N-linked (GlcNAc...) asparagine glycan is linked to Asn270.

It to yeast YNL033w.

It localises to the cell membrane. This is an uncharacterized protein from Saccharomyces cerevisiae (strain ATCC 204508 / S288c) (Baker's yeast).